We begin with the raw amino-acid sequence, 197 residues long: UPF0228 protein MA_3125 (197 aa).

It belongs to the UPF0228 family.

The chain is UPF0228 protein MA_3125 from Methanosarcina acetivorans (strain ATCC 35395 / DSM 2834 / JCM 12185 / C2A).